A 182-amino-acid chain; its full sequence is Coiled-coil domain-containing protein 32 (182 aa).

Basic and acidic residues predominate over residues Met1–Ala10. 2 disordered regions span residues Met1–Trp61 and Pro153–Lys182. A compositionally biased stretch (polar residues) spans Pro153–Asp167. Residues Glu172–Lys182 are compositionally biased toward acidic residues.

As to quaternary structure, associates with adaptor protein complex 2 (AP-2).

It localises to the membrane. It is found in the coated pit. Functionally, regulates clathrin-mediated endocytsois of cargos such as transferrin probably through the association and modulation of adaptor protein complex 2 (AP-2). Has a role in ciliogenesis and is required for proper cephalic and left/right axis development. This is Coiled-coil domain-containing protein 32 from Danio rerio (Zebrafish).